Consider the following 648-residue polypeptide: Chaperone protein HtpG (648 aa).

The segment at 1–353 (MNARVEQLEF…AQDMSLNVSR (353 aa)) is a; substrate-binding. Positions 354-567 (EILQQDRQIK…TFGITPALAR (214 aa)) are b. The interval 568–648 (IYRATGQDVP…LLADRLTRTL (81 aa)) is c.

This sequence belongs to the heat shock protein 90 family. In terms of assembly, homodimer.

The protein resides in the cytoplasm. Molecular chaperone. Has ATPase activity. The polypeptide is Chaperone protein HtpG (Mycobacterium ulcerans (strain Agy99)).